The following is a 369-amino-acid chain: 3-isopropylmalate dehydrogenase (369 aa).

76–89 (GPKWDRNPSHLRPE) is a binding site for NAD(+). Arginine 96, arginine 106, arginine 134, and aspartate 223 together coordinate substrate. Residues aspartate 223, aspartate 247, and aspartate 251 each contribute to the Mg(2+) site. 281-293 (GSAPDIAGQNKAN) contributes to the NAD(+) binding site.

The protein belongs to the isocitrate and isopropylmalate dehydrogenases family. LeuB type 1 subfamily. Homodimer. Mg(2+) is required as a cofactor. Requires Mn(2+) as cofactor.

It is found in the cytoplasm. The enzyme catalyses (2R,3S)-3-isopropylmalate + NAD(+) = 4-methyl-2-oxopentanoate + CO2 + NADH. The protein operates within amino-acid biosynthesis; L-leucine biosynthesis; L-leucine from 3-methyl-2-oxobutanoate: step 3/4. Its function is as follows. Catalyzes the oxidation of 3-carboxy-2-hydroxy-4-methylpentanoate (3-isopropylmalate) to 3-carboxy-4-methyl-2-oxopentanoate. The product decarboxylates to 4-methyl-2 oxopentanoate. The chain is 3-isopropylmalate dehydrogenase (leuB) from Priestia megaterium (strain DSM 319 / IMG 1521) (Bacillus megaterium).